The following is a 716-amino-acid chain: Protein Hook homolog 2 (716 aa).

The interval 1–161 is required for localization to the centrosome and induction of aggresome formation; sequence MSVDKAELCG…ELMTKDTPDS (161 aa). The segment at 1-546 is sufficient for interaction with microtubules; sequence MSVDKAELCG…LKRKLEDHLQ (546 aa). One can recognise a Calponin-homology (CH) domain in the interval 6 to 122; that stretch reads AELCGSLLTW…KLLQLVLGCA (117 aa). S163 is modified (phosphoserine). Coiled coils occupy residues 188 to 427 and 455 to 605; these read DHLQ…AQLQ and AELR…VDKA. Residues 533 to 716 form a required for localization to the centrosome and induction of aggresome formation region; that stretch reads DPTLLKRKLE…ALSLRPTDKH (184 aa). Positions 582–716 are sufficient for interaction with CNTRL; sequence DSLQKKDADL…ALSLRPTDKH (135 aa).

Belongs to the hook family. In terms of assembly, self-associates. Component of the FTS/Hook/FHIP complex (FHF complex), composed of AKTIP/FTS, FHIP1B, and one or more members of the Hook family of proteins HOOK1, HOOK2, and HOOK3. May interact directly with AKTIP/FTS, HOOK1 and HOOK3. Associates with several subunits of the homotypic vesicular sorting complex (the HOPS complex) including VPS16 and VPS41; these interactions may be indirect. Interacts with CNTRL. Interacts with microtubules. Interacts with ZC3H14. Interacts with LRGUK (via guanylate kinase-like domain). Interacts with CCDC181. Interacts with AP4M1; the interaction is direct, mediates the interaction between FTS-Hook-FHIP (FHF) complex and AP-4 and the perinuclear distribution of AP-4. Expressed in brain, cerebellum, kidney, liver and heart, with highest levels in heart and kidney (at protein level).

The protein resides in the cytoplasm. It localises to the cytoskeleton. The protein localises to the microtubule organizing center. It is found in the centrosome. Its subcellular location is the golgi apparatus. The protein resides in the trans-Golgi network. Its function is as follows. Component of the FTS/Hook/FHIP complex (FHF complex). The FHF complex may function to promote vesicle trafficking and/or fusion via the homotypic vesicular protein sorting complex (the HOPS complex). Contributes to the establishment and maintenance of centrosome function. May function in the positioning or formation of aggresomes, which are pericentriolar accumulations of misfolded proteins, proteasomes and chaperones. FHF complex promotes the distribution of AP-4 complex to the perinuclear area of the cell. The sequence is that of Protein Hook homolog 2 (Hook2) from Mus musculus (Mouse).